The sequence spans 397 residues: Putative 8-amino-7-oxononanoate synthase (397 aa).

Arg22 is a binding site for substrate. A pyridoxal 5'-phosphate-binding site is contributed by 109–110 (GW). A substrate-binding site is contributed by His139. Pyridoxal 5'-phosphate contacts are provided by residues Ser187, 212–215 (DEAH), and 241–244 (TFSK). Lys244 is modified (N6-(pyridoxal phosphate)lysine). Thr358 contributes to the substrate binding site.

This sequence belongs to the class-II pyridoxal-phosphate-dependent aminotransferase family. BioF subfamily. Homodimer. The cofactor is pyridoxal 5'-phosphate.

It catalyses the reaction 6-carboxyhexanoyl-[ACP] + L-alanine + H(+) = (8S)-8-amino-7-oxononanoate + holo-[ACP] + CO2. Its pathway is cofactor biosynthesis; biotin biosynthesis. Its function is as follows. Catalyzes the decarboxylative condensation of pimeloyl-[acyl-carrier protein] and L-alanine to produce 8-amino-7-oxononanoate (AON), [acyl-carrier protein], and carbon dioxide. The protein is Putative 8-amino-7-oxononanoate synthase (bioF) of Bordetella parapertussis (strain 12822 / ATCC BAA-587 / NCTC 13253).